The sequence spans 478 residues: ATP synthase subunit beta (478 aa).

164-171 contributes to the ATP binding site; it reads GGAGVGKT.

This sequence belongs to the ATPase alpha/beta chains family. F-type ATPases have 2 components, CF(1) - the catalytic core - and CF(0) - the membrane proton channel. CF(1) has five subunits: alpha(3), beta(3), gamma(1), delta(1), epsilon(1). CF(0) has three main subunits: a(1), b(2) and c(9-12). The alpha and beta chains form an alternating ring which encloses part of the gamma chain. CF(1) is attached to CF(0) by a central stalk formed by the gamma and epsilon chains, while a peripheral stalk is formed by the delta and b chains.

Its subcellular location is the cell membrane. The catalysed reaction is ATP + H2O + 4 H(+)(in) = ADP + phosphate + 5 H(+)(out). Functionally, produces ATP from ADP in the presence of a proton gradient across the membrane. The catalytic sites are hosted primarily by the beta subunits. The sequence is that of ATP synthase subunit beta from Streptomyces avermitilis (strain ATCC 31267 / DSM 46492 / JCM 5070 / NBRC 14893 / NCIMB 12804 / NRRL 8165 / MA-4680).